Consider the following 521-residue polypeptide: ATP synthase subunit beta (521 aa).

2 stretches are compositionally biased toward low complexity: residues 1–21 (MAKA…AAKA) and 28–42 (PKTT…TKSG). The interval 1-42 (MAKAATPKTTAAAEAKPAAKAPAKKAAPKTTAAAKPAATKSG) is disordered. Position 199-206 (199-206 (GGAGVGKT)) interacts with ATP.

The protein belongs to the ATPase alpha/beta chains family. F-type ATPases have 2 components, CF(1) - the catalytic core - and CF(0) - the membrane proton channel. CF(1) has five subunits: alpha(3), beta(3), gamma(1), delta(1), epsilon(1). CF(0) has three main subunits: a(1), b(2) and c(9-12). The alpha and beta chains form an alternating ring which encloses part of the gamma chain. CF(1) is attached to CF(0) by a central stalk formed by the gamma and epsilon chains, while a peripheral stalk is formed by the delta and b chains.

It localises to the cell inner membrane. It carries out the reaction ATP + H2O + 4 H(+)(in) = ADP + phosphate + 5 H(+)(out). In terms of biological role, produces ATP from ADP in the presence of a proton gradient across the membrane. The catalytic sites are hosted primarily by the beta subunits. The chain is ATP synthase subunit beta from Brucella canis (strain ATCC 23365 / NCTC 10854 / RM-666).